A 335-amino-acid chain; its full sequence is Anthranilate phosphoribosyltransferase 2 (335 aa).

5-phospho-alpha-D-ribose 1-diphosphate-binding positions include Gly70, 73–74, Thr78, 80–83, 98–106, and Ser110; these read GD, NIST, and KHGNRSASS. Gly70 contributes to the anthranilate binding site. Ser82 serves as a coordination point for Mg(2+). Anthranilate is bound at residue Asn101. Residue Arg156 participates in anthranilate binding. Mg(2+)-binding residues include Asp215 and Glu216.

Belongs to the anthranilate phosphoribosyltransferase family. In terms of assembly, homodimer. Mg(2+) is required as a cofactor.

It catalyses the reaction N-(5-phospho-beta-D-ribosyl)anthranilate + diphosphate = 5-phospho-alpha-D-ribose 1-diphosphate + anthranilate. Its pathway is amino-acid biosynthesis; L-tryptophan biosynthesis; L-tryptophan from chorismate: step 2/5. Catalyzes the transfer of the phosphoribosyl group of 5-phosphorylribose-1-pyrophosphate (PRPP) to anthranilate to yield N-(5'-phosphoribosyl)-anthranilate (PRA). The protein is Anthranilate phosphoribosyltransferase 2 of Streptomyces coelicolor (strain ATCC BAA-471 / A3(2) / M145).